The following is a 603-amino-acid chain: Sesquiterpene synthase Cad (603 aa).

Residues 1–13 (MAEVGLSQNSYAS) are compositionally biased toward polar residues. Residues 1–23 (MAEVGLSQNSYASANHDKKSEQQ) form a disordered region. Residues Asp-357, Asp-361, Asp-498, and Glu-506 each contribute to the Mg(2+) site. Residues 357–361 (DDIFD) carry the DDXXD motif motif.

The protein belongs to the terpene synthase family. Tpsa subfamily. The cofactor is Mg(2+). Requires Mn(2+) as cofactor. Mostly expressed in leaves and, to a lower extent, in stems and xylem.

It catalyses the reaction (2E,6E)-farnesyl diphosphate = beta-cadinene + diphosphate. It participates in secondary metabolite biosynthesis; terpenoid biosynthesis. Functionally, sesquiterpene synthase involved in the biosynthesis of volatile compounds. Mediates the conversion of (2E,6E)-farnesyl diphosphate (FPP) into beta-cadinene. Not active with geranyl diphosphate (GPP) and geranylgeranyl diphosphate (GGPP) as substrates. In Chamaecyparis formosensis (Formosan cypress), this protein is Sesquiterpene synthase Cad.